The sequence spans 371 residues: Cytochrome b (371 aa).

The next 4 membrane-spanning stretches (helical) occupy residues 25 to 45 (FGSM…FLAV), 69 to 90 (WMMQ…YTHI), 105 to 125 (WLSG…GYVL), and 170 to 190 (FFAL…LHIM). Positions 75 and 89 each coordinate heme b. Residues His-174 and His-188 each contribute to the heme b site. His-193 contacts a ubiquinone. Transmembrane regions (helical) follow at residues 218-238 (YKDM…VAFF), 280-300 (LGGA…PFTH), 312-332 (IMQL…WAAT), and 339-358 (FTTI…ITNP).

It belongs to the cytochrome b family. As to quaternary structure, the cytochrome bc1 complex contains 3 respiratory subunits (MT-CYB, CYC1 and UQCRFS1), 2 core proteins (UQCRC1 and UQCRC2) and probably 6 low-molecular weight proteins. The cofactor is heme b.

The protein resides in the mitochondrion inner membrane. Its function is as follows. Component of the ubiquinol-cytochrome c reductase complex (complex III or cytochrome b-c1 complex) that is part of the mitochondrial respiratory chain. The b-c1 complex mediates electron transfer from ubiquinol to cytochrome c. Contributes to the generation of a proton gradient across the mitochondrial membrane that is then used for ATP synthesis. The sequence is that of Cytochrome b (MT-CYB) from Eryx colubrinus colubrinus.